The primary structure comprises 155 residues: Putative pre-16S rRNA nuclease (155 aa).

The protein belongs to the YqgF nuclease family.

The protein localises to the cytoplasm. Its function is as follows. Could be a nuclease involved in processing of the 5'-end of pre-16S rRNA. This chain is Putative pre-16S rRNA nuclease, found in Xanthomonas oryzae pv. oryzae (strain MAFF 311018).